A 287-amino-acid chain; its full sequence is uncharacterized protein (287 aa).

Helical transmembrane passes span 12–32 (IILLFGMLVFLVLLGLGGAAL) and 217–237 (YTIGAITLVSVSGGVLAVLIV).

It is found in the cell membrane. This is an uncharacterized protein from Mycoplasma pneumoniae (strain ATCC 29342 / M129 / Subtype 1) (Mycoplasmoides pneumoniae).